Reading from the N-terminus, the 334-residue chain is Putative fatty acid elongase 1 (334 aa).

Residues 1 to 51 (MDLTGAHMLKIHRPSIDHPFGVDLWHLFEQLSIKTIGWNPSEFEYIPGKTP) lie on the Lumenal side of the membrane. Residues 52-72 (MSQWSSVIVSITAYYVIILSG) traverse the membrane as a helical segment. Residues 73 to 86 (RAIMTNRKPLKQRR) lie on the Cytoplasmic side of the membrane. A helical membrane pass occupies residues 87–107 (LFQLHNFILTIISGALLALLV). Residues 108–135 (EEVFRNYMRNGLFYCVCDSRHFTQRLVT) lie on the Lumenal side of the membrane. A helical membrane pass occupies residues 136-156 (LYYLNYLTKYLELMDTVFLFL). At 157–160 (KKKP) the chain is on the cytoplasmic side. A helical membrane pass occupies residues 161 to 181 (LAFLHCYHHGITALLCFTQLL). Topologically, residues 182–187 (GRTSVQ) are lumenal. The helical transmembrane segment at 188–208 (WGVIGLNLYVHVIMYSYYFLA) threads the bilayer. Topologically, residues 209 to 224 (ACGRRVWWKQWVTRVQ) are cytoplasmic. Residues 225 to 245 (IIQFVLDLILCYFGTYSHIAF) traverse the membrane as a helical segment. At 246–260 (RYFPWLPHVGDCSGS) the chain is on the lumenal side. Residues 261–281 (LFAAFFGCGVLSSYLFLFIGF) form a helical membrane-spanning segment. Residues 282–334 (YINTYIKRGAKKNQRKAAGKADNTSVAAAAGSEALAATTATNASPFSARSRKL) are Cytoplasmic-facing. Position 325 is a phosphoserine (Ser-325).

The protein belongs to the ELO family.

Its subcellular location is the endoplasmic reticulum membrane. The catalysed reaction is a very-long-chain acyl-CoA + malonyl-CoA + H(+) = a very-long-chain 3-oxoacyl-CoA + CO2 + CoA. May be involved in the synthesis of very long chain fatty acids. This Schizosaccharomyces pombe (strain 972 / ATCC 24843) (Fission yeast) protein is Putative fatty acid elongase 1.